We begin with the raw amino-acid sequence, 313 residues long: Putative S-adenosyl-L-methionine-dependent methyltransferase MAV_4573 (313 aa).

Residues Asp-129 and 158–159 each bind S-adenosyl-L-methionine; that span reads DL.

Belongs to the UPF0677 family.

Functionally, exhibits S-adenosyl-L-methionine-dependent methyltransferase activity. The sequence is that of Putative S-adenosyl-L-methionine-dependent methyltransferase MAV_4573 from Mycobacterium avium (strain 104).